The sequence spans 413 residues: Na(+)-translocating NADH-quinone reductase subunit B (413 aa).

The next 3 helical transmembrane spans lie at 55 to 75 (IMIMVWFAVFPAMFWGMYNAG), 128 to 148 (FLPIYATVFIVGGFWEVLFCM), and 163 to 183 (ILFALIVPPTLPLWQAALGIT). At Thr-235 the chain carries FMN phosphoryl threonine. 5 helical membrane passes run 267–287 (IPGSIGEVSTLALMIGAAMIV), 296–316 (IIAGVMIGMIAVSTLFNVIGS), 324–344 (MPWHWHLVLGGFAFGMFFMAT), 357–377 (WWYGILIGAMCVMIRVVNPAY), and 380–400 (GMMLAILFANLFAPLFDHVVI).

The protein belongs to the NqrB/RnfD family. Composed of six subunits; NqrA, NqrB, NqrC, NqrD, NqrE and NqrF. FMN is required as a cofactor.

Its subcellular location is the cell inner membrane. The catalysed reaction is a ubiquinone + n Na(+)(in) + NADH + H(+) = a ubiquinol + n Na(+)(out) + NAD(+). NQR complex catalyzes the reduction of ubiquinone-1 to ubiquinol by two successive reactions, coupled with the transport of Na(+) ions from the cytoplasm to the periplasm. NqrA to NqrE are probably involved in the second step, the conversion of ubisemiquinone to ubiquinol. This chain is Na(+)-translocating NADH-quinone reductase subunit B, found in Vibrio campbellii (strain ATCC BAA-1116).